A 1723-amino-acid polypeptide reads, in one-letter code: Probable outer membrane protein pmp20 (1723 aa).

The first 21 residues, 1–21 (MKWLPATAVFAAVLPALTAFG), serve as a signal peptide directing secretion. Disordered stretches follow at residues 78 to 100 (VTPDANDSSSNSSKGGSSSSGAT) and 139 to 161 (LSSSSSGGSSSSSSSSSSGSASA). Low complexity-rich tracts occupy residues 85 to 100 (SSSNSSKGGSSSSGAT) and 140 to 161 (SSSSSGGSSSSSSSSSSGSASA). The Autotransporter domain occupies 1434–1723 (EDPAFNNFWA…MANGGIRFVF (290 aa)).

The protein belongs to the PMP outer membrane protein family.

The protein localises to the secreted. The protein resides in the cell wall. It localises to the cell outer membrane. This chain is Probable outer membrane protein pmp20 (pmp20), found in Chlamydia pneumoniae (Chlamydophila pneumoniae).